A 1373-amino-acid chain; its full sequence is DNA-directed RNA polymerase subunit beta (1373 aa).

It belongs to the RNA polymerase beta chain family. The RNAP catalytic core consists of 2 alpha, 1 beta, 1 beta' and 1 omega subunit. When a sigma factor is associated with the core the holoenzyme is formed, which can initiate transcription.

It catalyses the reaction RNA(n) + a ribonucleoside 5'-triphosphate = RNA(n+1) + diphosphate. Functionally, DNA-dependent RNA polymerase catalyzes the transcription of DNA into RNA using the four ribonucleoside triphosphates as substrates. This Rickettsia canadensis (strain McKiel) protein is DNA-directed RNA polymerase subunit beta.